A 419-amino-acid chain; its full sequence is Histidine--tRNA ligase (419 aa).

It belongs to the class-II aminoacyl-tRNA synthetase family. As to quaternary structure, homodimer.

The protein resides in the cytoplasm. The catalysed reaction is tRNA(His) + L-histidine + ATP = L-histidyl-tRNA(His) + AMP + diphosphate + H(+). This Trichlorobacter lovleyi (strain ATCC BAA-1151 / DSM 17278 / SZ) (Geobacter lovleyi) protein is Histidine--tRNA ligase.